A 310-amino-acid polypeptide reads, in one-letter code: Olfactory receptor 5AR1 (310 aa).

Residues 1-25 are Extracellular-facing; it reads MDKENHSVVTEFVFMGITQDPQLQI. A glycan (N-linked (GlcNAc...) asparagine) is linked at Asn-5. The helical transmembrane segment at 26–46 threads the bilayer; sequence IFFVVFLLVYLVNVIGNVGMI. At 47–54 the chain is on the cytoplasmic side; the sequence is ILIITDSQ. The chain crosses the membrane as a helical span at residues 55-75; the sequence is LHTPMYFFLCNLSFVDLGYSS. At 76–99 the chain is on the extracellular side; that stretch reads AIAPRMLADFLTKHKVISFSSCAT. A disulfide bridge links Cys-97 with Cys-189. Residues 100–120 form a helical membrane-spanning segment; it reads QFAFFVGFVDAECYVLAAMAY. At 121–133 the chain is on the cytoplasmic side; that stretch reads DRFVAICRPLHYS. Residues 134–154 form a helical membrane-spanning segment; sequence TLMSKKVCLVLMLGSYFAGLV. The Extracellular segment spans residues 155 to 196; it reads SLVAHTSLTFSLSYCGSNIINHFFCEIPPLLALSCSDTYISE. The helical transmembrane segment at 197–217 threads the bilayer; the sequence is ILLFSLCGFIEFSTILIIFIS. Cys-203 is a binding site for Cu cation. Over 218–237 the chain is Cytoplasmic; it reads YAFILIAIIRIRSAEGRLKA. A helical transmembrane segment spans residues 238–258; it reads FSTCGSHLTGVTLFYGTVMFM. Cu cation contacts are provided by Met-256 and Arg-261. Topologically, residues 259 to 271 are extracellular; it reads YLRPTSSYSLDQD. Residues 272–292 traverse the membrane as a helical segment; the sequence is KWASVFYTIIIPMLNPLIYSL. The Cytoplasmic portion of the chain corresponds to 293 to 310; sequence RNKDVKAAFKKLIGKKPQ.

It belongs to the G-protein coupled receptor 1 family.

The protein resides in the cell membrane. Copper binding enhances receptor activity in response to odorant binding. Its function is as follows. Olfactory receptor that is activated by the binding of organosulfur odorants with thioether groups such as (methylthio)methanethiol (MTMT). The activity of this receptor is mediated by G proteins which activate adenylyl cyclase. This chain is Olfactory receptor 5AR1, found in Mus musculus (Mouse).